The primary structure comprises 98 residues: Keratin, high sulfur matrix protein, IIIB3 (98 aa).

Alanine 1 bears the N-acetylalanine mark.

The protein belongs to the KRTAP type 3 family. In terms of assembly, interacts with wool keratins. As to expression, wool.

In terms of biological role, in the wool cortex, wool keratin intermediate filaments are embedded in an interfilamentous matrix, consisting of hair keratin-associated proteins (KRTAP), which are essential for the formation of a rigid and resistant wool shaft through their extensive disulfide bond cross-linking with abundant cysteine residues of wool keratins. The matrix proteins include the high-sulfur and high-glycine-tyrosine keratins. This chain is Keratin, high sulfur matrix protein, IIIB3, found in Ovis aries (Sheep).